We begin with the raw amino-acid sequence, 363 residues long: Chalcone synthase B (363 aa).

The active site involves Cys-170.

This sequence belongs to the thiolase-like superfamily. Chalcone/stilbene synthases family.

The enzyme catalyses (E)-4-coumaroyl-CoA + 3 malonyl-CoA + 3 H(+) = 2',4,4',6'-tetrahydroxychalcone + 3 CO2 + 4 CoA. Its pathway is secondary metabolite biosynthesis; flavonoid biosynthesis. In terms of biological role, the primary product of this enzyme is 4,2',4',6'-tetrahydroxychalcone (also termed naringenin-chalcone or chalcone) which can under specific conditions spontaneously isomerize into naringenin. The polypeptide is Chalcone synthase B (CHSB) (Ipomoea nil (Japanese morning glory)).